Consider the following 314-residue polypeptide: Mitochondrial thiamine pyrophosphate carrier 1 (314 aa).

6 helical membrane passes run 14–30 (VAAW…GLLA), 84–100 (LLYV…YSLF), 116–136 (LVVG…FDVL), 170–186 (GSIA…SIMF), 217–233 (SAGT…TFPL), and 285–302 (GILV…VSFW). 3 Solcar repeats span residues 14 to 103 (VAAW…FNRY), 110 to 195 (EARL…IRIY), and 210 to 310 (ELAT…AIHY).

Belongs to the mitochondrial carrier (TC 2.A.29) family.

The protein localises to the mitochondrion inner membrane. In terms of biological role, mitochondrial transporter that mediates uptake of thiamine pyrophosphate (ThPP) into mitochondria. The protein is Mitochondrial thiamine pyrophosphate carrier 1 (TPC1) of Saccharomyces cerevisiae (strain YJM789) (Baker's yeast).